We begin with the raw amino-acid sequence, 1607 residues long: Abnormal cell migration protein 38 (1607 aa).

Disordered regions lie at residues 14 to 52 (EFNK…SQDF), 67 to 93 (RLSP…QYHV), 167 to 222 (STSY…AAQA), 326 to 425 (GSSA…PPSQ), 459 to 478 (SPNT…GMDQ), 549 to 594 (MVHR…QHSY), 845 to 931 (YDEN…PETE), 1017 to 1061 (SVQV…DYDM), 1141 to 1241 (EPSP…VTPK), 1319 to 1378 (ETPN…KGQL), 1392 to 1445 (FANV…PQAV), and 1517 to 1607 (KVKT…STDP). 2 stretches are compositionally biased toward polar residues: residues 81 to 93 (PGPS…QYHV) and 179 to 191 (PSGN…NHQQ). The span at 195–205 (VPQVQQQPAKP) shows a compositional bias: low complexity. Basic residues predominate over residues 206–218 (KTTKKRPPPKKKT). The span at 327 to 341 (SSASSSAQPSQPAKK) shows a compositional bias: low complexity. 2 stretches are compositionally biased toward polar residues: residues 349–371 (VPNT…QITP) and 379–425 (PTTT…PPSQ). The span at 585 to 594 (NSHSQSQHSY) shows a compositional bias: low complexity. Residues 858-871 (EEPESESESEPEAE) are compositionally biased toward acidic residues. 2 stretches are compositionally biased toward basic and acidic residues: residues 872–886 (PEPK…EPAR) and 907–917 (YRNESESTFDW). Composition is skewed to low complexity over residues 1333 to 1354 (PNIP…SVSV), 1395 to 1419 (VPSS…VSAK), and 1584 to 1601 (LLGT…SSGL).

Expressed in gonad distal tip cells and gonad sheath cells.

It is found in the nucleus. The protein localises to the cytoplasm. Its function is as follows. During gonad development, involved in distal tip cell (DTC) migration from the dorsal side of the hermaphrodite body to the midbody which allows for the formation of gonad arms. Role in gonad DTC migration may be in association with integrin related proteins ina-1 and mig-15. This Caenorhabditis elegans protein is Abnormal cell migration protein 38.